The chain runs to 273 residues: Nitrogenase iron protein (273 aa).

8-15 lines the ATP pocket; sequence GKGGIGKS. Residue C94 participates in [4Fe-4S] cluster binding. R97 bears the ADP-ribosylarginine; by dinitrogenase reductase ADP-ribosyltransferase mark. C130 contributes to the [4Fe-4S] cluster binding site.

Belongs to the NifH/BchL/ChlL family. As to quaternary structure, homodimer. The cofactor is [4Fe-4S] cluster. The reversible ADP-ribosylation of Arg-97 inactivates the nitrogenase reductase and regulates nitrogenase activity.

It carries out the reaction N2 + 8 reduced [2Fe-2S]-[ferredoxin] + 16 ATP + 16 H2O = H2 + 8 oxidized [2Fe-2S]-[ferredoxin] + 2 NH4(+) + 16 ADP + 16 phosphate + 6 H(+). In terms of biological role, the key enzymatic reactions in nitrogen fixation are catalyzed by the nitrogenase complex, which has 2 components: the iron protein and the molybdenum-iron protein. This Desulforapulum autotrophicum (strain ATCC 43914 / DSM 3382 / VKM B-1955 / HRM2) (Desulfobacterium autotrophicum) protein is Nitrogenase iron protein.